Reading from the N-terminus, the 261-residue chain is Ribosomal RNA small subunit methyltransferase J (261 aa).

Residues 111–112 (RD), 127–128 (ER), 163–164 (SS), and aspartate 181 each bind S-adenosyl-L-methionine.

The protein belongs to the methyltransferase superfamily. RsmJ family.

It localises to the cytoplasm. It carries out the reaction guanosine(1516) in 16S rRNA + S-adenosyl-L-methionine = N(2)-methylguanosine(1516) in 16S rRNA + S-adenosyl-L-homocysteine + H(+). Functionally, specifically methylates the guanosine in position 1516 of 16S rRNA. The chain is Ribosomal RNA small subunit methyltransferase J from Shewanella sp. (strain MR-7).